A 235-amino-acid chain; its full sequence is UPF0502 protein Bmul_3231/BMULJ_05293 (235 aa).

This sequence belongs to the UPF0502 family.

The polypeptide is UPF0502 protein Bmul_3231/BMULJ_05293 (Burkholderia multivorans (strain ATCC 17616 / 249)).